The following is a 367-amino-acid chain: Glutamate 5-kinase (367 aa).

Position 8 (K8) interacts with ATP. The substrate site is built by S49, D136, and N148. Residues 168–169 and 210–216 each bind ATP; these read TD and TGGMATK. The PUA domain occupies 275–353; the sequence is TGKLLLDAGA…DQIVQILGYE (79 aa).

This sequence belongs to the glutamate 5-kinase family.

Its subcellular location is the cytoplasm. It catalyses the reaction L-glutamate + ATP = L-glutamyl 5-phosphate + ADP. It functions in the pathway amino-acid biosynthesis; L-proline biosynthesis; L-glutamate 5-semialdehyde from L-glutamate: step 1/2. Functionally, catalyzes the transfer of a phosphate group to glutamate to form L-glutamate 5-phosphate. This Synechococcus elongatus (strain ATCC 33912 / PCC 7942 / FACHB-805) (Anacystis nidulans R2) protein is Glutamate 5-kinase.